The following is a 141-amino-acid chain: 3-hydroxyacyl-[acyl-carrier-protein] dehydratase FabZ (141 aa).

His47 is a catalytic residue.

It belongs to the thioester dehydratase family. FabZ subfamily.

The protein resides in the cytoplasm. The enzyme catalyses a (3R)-hydroxyacyl-[ACP] = a (2E)-enoyl-[ACP] + H2O. In terms of biological role, involved in unsaturated fatty acids biosynthesis. Catalyzes the dehydration of short chain beta-hydroxyacyl-ACPs and long chain saturated and unsaturated beta-hydroxyacyl-ACPs. The sequence is that of 3-hydroxyacyl-[acyl-carrier-protein] dehydratase FabZ from Caldanaerobacter subterraneus subsp. tengcongensis (strain DSM 15242 / JCM 11007 / NBRC 100824 / MB4) (Thermoanaerobacter tengcongensis).